The chain runs to 782 residues: E3 UFM1-protein ligase 1 homolog (782 aa).

Residues 404–478 (NVSTQELEDE…SRGGGGASKK (75 aa)) are disordered.

Belongs to the UFL1 family.

In terms of biological role, E3 UFM1-protein ligase that mediates ufmylation of target proteins. The chain is E3 UFM1-protein ligase 1 homolog from Drosophila melanogaster (Fruit fly).